The primary structure comprises 752 residues: THO complex subunit HPR1 (752 aa).

The residue at position 234 (S234) is a Phosphoserine. The tract at residues 648–752 (RKKRALEEEA…SNGSSTQDMK (105 aa)) is disordered. Positions 692–702 (EISEENTKIKS) are enriched in basic and acidic residues. Polar residues predominate over residues 720–752 (PQNTTAQLENPKTEDNNAATSNISNGSSTQDMK).

In terms of assembly, component of the THO complex, which is composed of HPR1, MFT1, THO2 and THP2. Together with SUB2, TEX1 and YRA1, THO forms the transcription/export (TREX) complex. THO associates with DNA and RNA in vitro.

It localises to the nucleus. In terms of biological role, component the THO subcomplex of the TREX complex, which operates in coupling transcription elongation to mRNA export. The THO complex is recruited to transcribed genes and moves along the gene with the elongating polymerase during transcription. THO is important for stabilizing nascent RNA in the RNA polymerase II elongation complex by preventing formation of DNA:RNA hybrids behind the elongating polymerase. It functions in cotranscriptional formation of an export-competent messenger ribonucleoprotein particle (mRNP) by facilitating the loading of ATP-dependent RNA helicase SUB2 and the mRNA export factor YRA1 along the nascent mRNA. This is THO complex subunit HPR1 (HPR1) from Saccharomyces cerevisiae (strain ATCC 204508 / S288c) (Baker's yeast).